A 386-amino-acid polypeptide reads, in one-letter code: RNA polymerase sigma factor SigA (386 aa).

A sigma-70 factor domain-2 region spans residues 154-224 (LAEANLRLVV…TRAIADQART (71 aa)). The Interaction with polymerase core subunit RpoC motif lies at 178 to 181 (DLIQ). Residues 233–309 (ETINKLIRVQ…DDVIESPVDY (77 aa)) form a sigma-70 factor domain-3 region. The segment at 322–375 (VMDTLTDREENVLRMRFGLDDGRMHTLEDVGKQFKVTRERIRQIEAKAIKKLRH) is sigma-70 factor domain-4. The H-T-H motif DNA-binding region spans 348–367 (LEDVGKQFKVTRERIRQIEA).

It belongs to the sigma-70 factor family. RpoD/SigA subfamily. In terms of assembly, interacts transiently with the RNA polymerase catalytic core.

Its subcellular location is the cytoplasm. In terms of biological role, sigma factors are initiation factors that promote the attachment of RNA polymerase to specific initiation sites and are then released. This sigma factor is the primary sigma factor during exponential growth. This is RNA polymerase sigma factor SigA from Lactococcus lactis subsp. lactis (strain IL1403) (Streptococcus lactis).